The sequence spans 215 residues: Superoxide dismutase [Mn] (215 aa).

Residues histidine 27, histidine 83, aspartate 170, and histidine 174 each coordinate Mn(2+).

It belongs to the iron/manganese superoxide dismutase family. Homodimer. The cofactor is Mn(2+).

The catalysed reaction is 2 superoxide + 2 H(+) = H2O2 + O2. Destroys superoxide anion radicals which are normally produced within the cells and which are toxic to biological systems. This Haemophilus influenzae (strain ATCC 51907 / DSM 11121 / KW20 / Rd) protein is Superoxide dismutase [Mn] (sodA).